The following is a 305-amino-acid chain: Protoheme IX farnesyltransferase (305 aa).

9 consecutive transmembrane segments (helical) span residues Val-31–His-51, Pro-52–Ile-72, Ala-102–Leu-119, Leu-123–Lys-145, Asn-151–Ser-171, Ile-179–Phe-199, Ile-225–Asn-245, Phe-247–Leu-267, and Ser-284–Ile-304.

It belongs to the UbiA prenyltransferase family. Protoheme IX farnesyltransferase subfamily.

It is found in the cell inner membrane. It catalyses the reaction heme b + (2E,6E)-farnesyl diphosphate + H2O = Fe(II)-heme o + diphosphate. It functions in the pathway porphyrin-containing compound metabolism; heme O biosynthesis; heme O from protoheme: step 1/1. In terms of biological role, converts heme B (protoheme IX) to heme O by substitution of the vinyl group on carbon 2 of heme B porphyrin ring with a hydroxyethyl farnesyl side group. This Rickettsia felis (strain ATCC VR-1525 / URRWXCal2) (Rickettsia azadi) protein is Protoheme IX farnesyltransferase.